Reading from the N-terminus, the 563-residue chain is Arginine--tRNA ligase (563 aa).

The short motif at 122–132 (PNIAKPMSMGH) is the 'HIGH' region element.

Belongs to the class-I aminoacyl-tRNA synthetase family. In terms of assembly, monomer.

The protein localises to the cytoplasm. It carries out the reaction tRNA(Arg) + L-arginine + ATP = L-arginyl-tRNA(Arg) + AMP + diphosphate. The sequence is that of Arginine--tRNA ligase from Levilactobacillus brevis (strain ATCC 367 / BCRC 12310 / CIP 105137 / JCM 1170 / LMG 11437 / NCIMB 947 / NCTC 947) (Lactobacillus brevis).